Reading from the N-terminus, the 329-residue chain is POU domain, class 5, transcription factor 2 (329 aa).

Over residues 1 to 14 the composition is skewed to polar residues; the sequence is MAGRRSSNVFPLSG. The disordered stretch occupies residues 1 to 24; that stretch reads MAGRRSSNVFPLSGNSGGGLEVDT. One can recognise a POU-specific domain in the interval 107 to 181; the sequence is DVSAIQKEME…LLKMWLEEVD (75 aa). The segment at residues 199 to 258 is a DNA-binding region (homeobox); the sequence is RKRRRASRERRIGSNLEKLFLQCPEPTPQQISYIAGRLRLQKDLVQVWFSNRSQMGSWPT.

It belongs to the POU transcription factor family. Class-5 subfamily. In terms of tissue distribution, in adult brain, expressed in the olfactory bulb, becoming specifically concentrated in the mitral cell layer. Also found in the pyramidal cell layer of the hippocampus, in the granule cell layer of the cerebellum and in the cortex.

It localises to the nucleus. In terms of biological role, transcription factor that binds preferentially to the octamer motif (5'-ATGTTAAT-3'). May exert a regulatory function in meiotic events that are required for terminal differentiation of male germ cell. This Mus musculus (Mouse) protein is POU domain, class 5, transcription factor 2 (Pou5f2).